Here is a 263-residue protein sequence, read N- to C-terminus: Metaxin-2 (263 aa).

Residue Ser-2 is modified to N-acetylserine.

This sequence belongs to the metaxin family. In terms of assembly, interacts with MTX1/metaxin-1. Associates with the mitochondrial contact site and cristae organizing system (MICOS) complex, composed of at least MICOS10/MIC10, CHCHD3/MIC19, CHCHD6/MIC25, APOOL/MIC27, IMMT/MIC60, APOO/MIC23/MIC26 and QIL1/MIC13. This complex was also known under the names MINOS or MitOS complex. The MICOS complex associates with mitochondrial outer membrane proteins SAMM50, MTX1 and MTX2 (together described as components of the mitochondrial outer membrane sorting assembly machinery (SAM) complex) and DNAJC11, mitochondrial inner membrane protein TMEM11 and with HSPA9. The MICOS and SAM complexes together with DNAJC11 are part of a large protein complex spanning both membranes termed the mitochondrial intermembrane space bridging (MIB) complex.

Its subcellular location is the mitochondrion outer membrane. The protein localises to the mitochondrion. Involved in transport of proteins into the mitochondrion. The protein is Metaxin-2 (Mtx2) of Mus musculus (Mouse).